The primary structure comprises 180 residues: Ribulose bisphosphate carboxylase small subunit, chloroplastic 5 (180 aa).

Residues Met-1–Arg-56 constitute a chloroplast transit peptide.

This sequence belongs to the RuBisCO small chain family. In terms of assembly, heterohexadecamer of 8 large and 8 small subunits.

The protein resides in the plastid. Its subcellular location is the chloroplast. Functionally, ruBisCO catalyzes two reactions: the carboxylation of D-ribulose 1,5-bisphosphate, the primary event in carbon dioxide fixation, as well as the oxidative fragmentation of the pentose substrate. Both reactions occur simultaneously and in competition at the same active site. Although the small subunit is not catalytic it is essential for maximal activity. The chain is Ribulose bisphosphate carboxylase small subunit, chloroplastic 5 from Solanum tuberosum (Potato).